Consider the following 172-residue polypeptide: Adenine phosphoribosyltransferase (172 aa).

Belongs to the purine/pyrimidine phosphoribosyltransferase family. Homodimer.

The protein localises to the cytoplasm. It catalyses the reaction AMP + diphosphate = 5-phospho-alpha-D-ribose 1-diphosphate + adenine. The protein operates within purine metabolism; AMP biosynthesis via salvage pathway; AMP from adenine: step 1/1. Its function is as follows. Catalyzes a salvage reaction resulting in the formation of AMP, that is energically less costly than de novo synthesis. This is Adenine phosphoribosyltransferase from Synechococcus sp. (strain CC9311).